The primary structure comprises 471 residues: MKIKTRFAPSPTGYLHVGGARTALYSWLFARNHGGEFVLRIEDTDLERSTPEAIEAIMDGMNWLSLEWDEGPYYQTKRFDRYNAVIDQMLEEGTAYKCYCSKERLEALREEQMAKGEKPRYDGRCRHSHEHHADDEPCVVRFANPQEGSVVFDDQIRGPIEFSNQELDDLIIRRTDGSPTYNFCVVVDDWDMEITHVIRGEDHINNTPRQINILKALKAPVPVYAHVSMINGDDGKKLSKRHGAVSVMQYRDDGYLPEALLNYLVRLGWSHGDQEIFTREEMIKYFTLNAVSKSASAFNTDKLLWLNHHYINALPPEYVATHLQWHIEQENIDTRNGPQLADLVKLLGERCKTLKEMSQSCRYFYEDFAEFDADAAKKHLRPVARQPLEVVRDKLAAITDWTAENVHHAIQATADELEVGMGKVGMPLRVAVTGAGQSPALDVTVHAIGKTRSIERINKALDFIAERENQQ.

The 'HIGH' region signature appears at 9–19 (PSPTGYLHVGG). 4 residues coordinate Zn(2+): Cys98, Cys100, Cys125, and His127. Positions 237–241 (KLSKR) match the 'KMSKS' region motif. Lys240 is an ATP binding site.

Belongs to the class-I aminoacyl-tRNA synthetase family. Glutamate--tRNA ligase type 1 subfamily. In terms of assembly, monomer. The cofactor is Zn(2+).

Its subcellular location is the cytoplasm. The enzyme catalyses tRNA(Glu) + L-glutamate + ATP = L-glutamyl-tRNA(Glu) + AMP + diphosphate. Its function is as follows. Catalyzes the attachment of glutamate to tRNA(Glu) in a two-step reaction: glutamate is first activated by ATP to form Glu-AMP and then transferred to the acceptor end of tRNA(Glu). This is Glutamate--tRNA ligase from Escherichia coli (strain ATCC 8739 / DSM 1576 / NBRC 3972 / NCIMB 8545 / WDCM 00012 / Crooks).